The following is a 222-amino-acid chain: MSKVLVTGFGPYGVTPVNPAQLTAEELDGRTIAGATVISRIVPNTFFESIAAAQQAIAEIEPALVIMLGEYPGRSMITVERLAQNVNDCGRYGLADCAGRVLVGEPTDPAGPVAYHATVPVRAMVLAMRKAGVPADVSDAAGTFVCNHLMYGVLHHLAQKGLPVRAGWIHLPCLPSVAALDHNLGVPSMSVQTAVAGVTAGIEAAIRQSADIREPIPSRLQI.

Residues glutamate 80, cysteine 146, and histidine 170 contribute to the active site.

The protein belongs to the peptidase C15 family. Homotetramer.

It localises to the cytoplasm. The catalysed reaction is Release of an N-terminal pyroglutamyl group from a polypeptide, the second amino acid generally not being Pro.. Its function is as follows. Removes 5-oxoproline from various penultimate amino acid residues except L-proline. The polypeptide is Pyrrolidone-carboxylate peptidase (Mycobacterium tuberculosis (strain ATCC 25177 / H37Ra)).